Reading from the N-terminus, the 827-residue chain is uncharacterized protein (827 aa).

The region spanning 12–82 is the PAS 1 domain; the sequence is FDADFEAILN…DMDIGVLSTG (71 aa). Residues 212–264 enclose the PAC 1 domain; that stretch reads LDVEFRLAAAEGGYSWYRSRAATRRAEDGSILRWYGTVEDIDDRRKMFEALKE. Residues 265 to 335 form the PAS 2 domain; it reads SEARFRAIAD…RVFYQAFDLR (71 aa). Residues 338-390 enclose the PAC 2 domain; sequence VRMEYRLKRAGGGSAWVIDIGQPRFASDGTFLGFVGIALDITERRNAEQERLL. The GGDEF domain occupies 428-561; that stretch reads TRLAILCLDL…GGGTIVQYEP (134 aa). The region spanning 570–820 is the EAL domain; it reads RQRMKVSLRH…QAMALLKSRS (251 aa).

This is an uncharacterized protein from Sinorhizobium fredii (strain NBRC 101917 / NGR234).